Consider the following 253-residue polypeptide: Discoidin-1 subunit A (253 aa).

Residue Ser2 is modified to N-acetylserine. In terms of domain architecture, F5/8 type C spans 2–152 (STQGLVQLLA…ISLRCEFYTQ (151 aa)). The Cell attachment site motif lies at 79 to 81 (RGD).

In terms of assembly, tetramer of four different chains (A to D). In terms of tissue distribution, stalk cells.

Its subcellular location is the cytoplasm. Functionally, galactose- and N-acetylgalactosamine-binding lectin. May play a role in cell-substratum adhesion rather than in cell-cell adhesion. May be necessary for the maintenance of normal elongate morphology during aggregation. The protein is Discoidin-1 subunit A (dscA-1) of Dictyostelium discoideum (Social amoeba).